The following is a 309-amino-acid chain: MADLQAILDSIHTDILPRIGEGKVADYIPELAKVDPRQFGMAIVTVDGKVYRVGDADIAFSIQSISKVFMLTLALGKVGESLWKRVGREPSGSAFNSIVQLEHEGGIPRNPFINAGAIAVSDVVMAGHAPREAIGELLRFVRYLADDESITIDDKVARSETQTGYRNVALANFMRAYRNLDHPVDHVLGVYFHQCALSMSCEQLARAGLFLAARGSNPMTGHSVVSPKRARRINALMLTCGHYDGSGDFAYHVGLPGKSGVGGGIFAVAPGIASIAVWSPGLNKVGNSQLGAVALEMLAARTGWSVFGD.

Substrate-binding residues include Ser64, Asn114, Glu160, Asn167, Tyr191, Tyr243, and Val261.

It belongs to the glutaminase family. In terms of assembly, homotetramer.

It catalyses the reaction L-glutamine + H2O = L-glutamate + NH4(+). The protein is Glutaminase of Rhizobium leguminosarum bv. trifolii (strain WSM2304).